The primary structure comprises 216 residues: Molybdenum cofactor guanylyltransferase (216 aa).

GTP is bound by residues 16–18 (LAG), K28, N57, D73, and D108. A Mg(2+)-binding site is contributed by D108.

The protein belongs to the MobA family. In terms of assembly, monomer. Mg(2+) is required as a cofactor.

It is found in the cytoplasm. It catalyses the reaction Mo-molybdopterin + GTP + H(+) = Mo-molybdopterin guanine dinucleotide + diphosphate. Transfers a GMP moiety from GTP to Mo-molybdopterin (Mo-MPT) cofactor (Moco or molybdenum cofactor) to form Mo-molybdopterin guanine dinucleotide (Mo-MGD) cofactor. This chain is Molybdenum cofactor guanylyltransferase, found in Rhizobium rhizogenes (strain K84 / ATCC BAA-868) (Agrobacterium radiobacter).